Consider the following 864-residue polypeptide: Leucine--tRNA ligase (864 aa).

Residues 42–52 carry the 'HIGH' region motif; that stretch reads PYPSGKLHMGH. The 'KMSKS' region motif lies at 619–623; sequence KMSKS. Residue Lys-622 participates in ATP binding.

This sequence belongs to the class-I aminoacyl-tRNA synthetase family.

It localises to the cytoplasm. It carries out the reaction tRNA(Leu) + L-leucine + ATP = L-leucyl-tRNA(Leu) + AMP + diphosphate. The protein is Leucine--tRNA ligase of Wigglesworthia glossinidia brevipalpis.